A 293-amino-acid chain; its full sequence is MEITFQKVEHRYQYKTPFERRALYDVDVSFPSGGYYAIIGHTGSGKSTMIQHLNGLLQPTNGTVQIGEHLISAGKKEKKLKPLRKKVGVVFQFPEHQLFEETVEKDICFGPTNFGVSVDEARQKARKAIELVGLEPELLTRSPFELSGGQMRRVAIAGVLAMEPEVLVLDEPTAGLDPKGQNELMEMFYKLHKEKGLTVILVTHNMEDAAQYAEQIVVMHKGTVFLQGSAEEVFSHADELEKIGVDLPMSLKYKRAIEEKFGISIPKATLSLEDLTHEVVQVLRKGGHESCSS.

Residues 3 to 246 form the ABC transporter domain; it reads ITFQKVEHRY…ADELEKIGVD (244 aa). Residue 40–47 participates in ATP binding; it reads GHTGSGKS.

The protein belongs to the ABC transporter superfamily. Energy-coupling factor EcfA family. Forms a stable energy-coupling factor (ECF) transporter complex composed of 2 membrane-embedded substrate-binding proteins (S component), 2 ATP-binding proteins (A component) and 2 transmembrane proteins (T component).

It localises to the cell membrane. In terms of biological role, ATP-binding (A) component of a common energy-coupling factor (ECF) ABC-transporter complex. Unlike classic ABC transporters this ECF transporter provides the energy necessary to transport a number of different substrates. The protein is Energy-coupling factor transporter ATP-binding protein EcfA2 of Bacillus cereus (strain ATCC 14579 / DSM 31 / CCUG 7414 / JCM 2152 / NBRC 15305 / NCIMB 9373 / NCTC 2599 / NRRL B-3711).